The chain runs to 110 residues: Pathogenesis-related protein (110 aa).

The N-terminal stretch at 1 to 19 (AFLLAATLTISSHMQEAGA) is a signal peptide.

Belongs to the thaumatin family.

The protein is Pathogenesis-related protein of Juniperus virginiana (Eastern redcedar).